Here is a 336-residue protein sequence, read N- to C-terminus: Inositol 2-dehydrogenase (336 aa).

This sequence belongs to the Gfo/Idh/MocA family. Homotetramer.

It catalyses the reaction myo-inositol + NAD(+) = scyllo-inosose + NADH + H(+). Functionally, involved in the oxidation of myo-inositol (MI) to 2-keto-myo-inositol (2KMI or 2-inosose). This chain is Inositol 2-dehydrogenase, found in Pseudomonas syringae pv. syringae (strain B728a).